Here is a 492-residue protein sequence, read N- to C-terminus: V-type proton ATPase subunit B 2 (492 aa).

This sequence belongs to the ATPase alpha/beta chains family. As to quaternary structure, V-ATPase is a heteromultimeric enzyme composed of a peripheral catalytic V1 complex (main components: subunits A, B, C, D, E, and F) attached to an integral membrane V0 proton pore complex (main component: the proteolipid protein).

In terms of biological role, non-catalytic subunit of the peripheral V1 complex of vacuolar ATPase. V-ATPase is responsible for acidifying a variety of intracellular compartments in eukaryotic cells. The chain is V-type proton ATPase subunit B 2 from Acetabularia acetabulum (Mermaid's wine glass).